The following is a 263-amino-acid chain: Aquaglyceroporin (263 aa).

Residues 1–22 (MDQFVFSGGSEGGGELGGDRER) are disordered. The next 6 helical transmembrane spans lie at 41–61 (KYFC…FGLA), 64–84 (GGAQ…ITLF), 113–133 (LCYV…GYGI), 157–177 (VIPT…YGVM), 180–200 (LTVP…GATM), and 222–242 (VAAL…AFLG).

The protein belongs to the MIP/aquaporin (TC 1.A.8) family. As to quaternary structure, multimer.

The protein localises to the vacuole membrane. It catalyses the reaction H2O(in) = H2O(out). It carries out the reaction glycerol(in) = glycerol(out). The enzyme catalyses urea(in) = urea(out). Functionally, mediates water and glycerol transport across cell membranes. Permeable to selected sugar alcohols of up to five carbons and urea. Permeable to methylamine/methylammonium. The protein is Aquaglyceroporin of Toxoplasma gondii (strain ATCC 50611 / Me49).